The sequence spans 708 residues: Large T antigen (708 aa).

The residue at position 1 (M1) is an N-acetylmethionine; by host. A J domain is found at 12-75 (QLMDLLGLER…VKYAHQPDFG (64 aa)). A binding of LT to the CUL7 complex region spans residues 63–89 (EDGVKYAHQPDFGGFWDATEIPTYGTD). Residues 103 to 107 (LFCSE) carry the LXCXE motif motif. S106, S112, S120, and S123 each carry phosphoserine; by host. Positions 109 to 134 (MPSSDDEATADSQHSTPPKKKRKVED) are disordered. Position 124 is a phosphothreonine; by host (T124). A Nuclear localization signal motif is present at residues 125–132 (PPKKKRKV). The segment at residues 139 to 254 (PSELLSFLSH…EESLPGGLKE (116 aa)) is a DNA-binding region (T-ag OBD). Residues 265 to 357 (TKQVSWKLVT…KRVDSLQLTR (93 aa)) form a T-ag D1-type zinc finger. Zn(2+) contacts are provided by C302, C305, H313, and H317. The interval 337-672 (CQQAVDTVLA…IDSQSQGSFQ (336 aa)) is binding to host TP53 protein. The region spanning 400 to 560 (KMDSVVYDFL…DYLKHCLERS (161 aa)) is the SF3 helicase domain. An ATPase activity region spans residues 418 to 616 (KKRYWLFKGP…FSLSVYQKMK (199 aa)). 426-433 (GPIDSGKT) serves as a coordination point for ATP. The C-terminal region stretch occupies residues 627–708 (DWLRNSDDDD…PPTPPPEPET (82 aa)). Residues 630 to 685 (RNSDDDDEDSQENADKNEDGGEKNMEDSGHETGIDSQSQGSFQAPQSSQSVHDHNQ) form a disordered region. S639 carries the post-translational modification Phosphoserine; by host. Positions 642-662 (NADKNEDGGEKNMEDSGHETG) are enriched in basic and acidic residues. Over residues 663 to 679 (IDSQSQGSFQAPQSSQS) the composition is skewed to polar residues. Phosphoserine; by host occurs at positions 676, 677, and 679. An N6-acetyllysine; by host modification is found at K697. The segment at 699 to 708 (PPTPPPEPET) is CPD. T701 is modified (phosphothreonine; by host).

In terms of assembly, isoform large T antigen forms homohexamers in the presence of ATP. Interacts with host HDAC1. Interacts (via LXCXE domain) with host RB1; the interaction induces the aberrant dissociation of RB1-E2F1 complex thereby disrupting RB1's activity. Interacts (via LXCXE domain) with host pRB-related proteins RBL1 and RBL2. Interacts (via C-terminus) with host TOP1 and POLA1 allowing DNA replication. Interacts with host TP53, inhibiting TP53 binding to DNA. Interacts with host preinitiation complex components TBP, TFIIA and TFIID to regulate transcription initiation. LT interacts (via CPD region) with host FBW7gamma isoform (via WD repeats); seems to function as a competitive inhibitor of FBW7gamma function for physiologic substrates. LT interacts with host E3 ubiquitin ligase CUL7; this interaction seems to inhibit CUL7. Component of a SCF(CUL7)-like complex composed of SV40 Lt and host proteins CUL7, SKP1, RBX1, and FBXW8. LT interacts with host BUB1; this interaction induces activation of a DNA damage response and promotes p53 stabilization and phosphorylation. Interacts with host FAM111A and this interaction is required for efficient viral replication and sustained viral gene expression in restrictive cell types. It depends on Mg(2+) as a cofactor. Post-translationally, phosphorylated on both serine and threonine residues. Phosphorylation on Ser-120 and Ser-123 inhibits viral replication, while phosphorylation on Thr-124 enhances replication by activating the DNA-binding domain. Phosphorylation on Thr-701 is required for binding to host FBW7gamma isoform. Dephosphorylated preferentially by PP2A on Ser-120, Ser-123, Ser-677 and perhaps Ser-679. Small t antigen inhibits the dephosphorylation by the AC form of PP2A. In terms of processing, O-Glycosylated near the C-terminal region. Acetylated by CBP in a TP53-dependent manner.

The protein localises to the host nucleus. The catalysed reaction is Couples ATP hydrolysis with the unwinding of duplex DNA by translocating in the 3'-5' direction.. It carries out the reaction ATP + H2O = ADP + phosphate + H(+). With respect to regulation, DNA helicase activity is inhibited by ATP-gamma-S. Its function is as follows. Isoform large T antigen is a key early protein essential for both driving viral replication and inducing cellular transformation. Plays a role in viral genome replication by driving entry of quiescent cells into the cell cycle and by autoregulating the synthesis of viral early mRNA. Displays highly oncogenic activities by corrupting the host cellular checkpoint mechanisms that guard cell division and the transcription, replication, and repair of DNA. Participates in the modulation of cellular gene expression preceeding viral DNA replication. This step involves binding to host key cell cycle regulators retinoblastoma protein RB1/pRb and TP53. Induces the disassembly of host E2F1 transcription factors from RB1, thus promoting transcriptional activation of E2F1-regulated S-phase genes. Inhibits host TP53 binding to DNA, abrogating the ability of TP53 to stimulate gene expression. Plays the role of a TFIID-associated factor (TAF) in transcription initiation for all three RNA polymerases, by stabilizing the TBP-TFIIA complex on promoters. Initiates viral DNA replication and unwinding via interactions with the viral origin of replication. Binds two adjacent sites in the SV40 origin. The replication fork movement is facilitated by Large T antigen helicase activity. Has processive 3'-5' DNA helicase activity which requires a short 3' single-stranded region and ATP; other (d)NTPs can partially replace ATP. Activates the transcription of viral late mRNA, through host TBP and TFIIA stabilization. Interferes with histone deacetylation mediated by HDAC1, leading to activation of transcription. May inactivate the growth-suppressing properties of the E3 ubiquitin ligase CUL7. Isoform 17kT antigen targets host RBL2 for degradation and promotes cell proliferation. Transactivates host cyclin A promoter through its J domain. Functionally, unwinds G4 DNA (planar arrays of 4 guanine bases stabilized by hydrogen bonds, parallel and antiparallel arrays were tested); unwinding occurs in the 3'-5' direction, requires a 3' single-stranded end and hydrolyzable ATP. The polypeptide is Large T antigen (Macaca (macaques)).